A 1389-amino-acid polypeptide reads, in one-letter code: Carboxypeptidase D (1389 aa).

The first 25 residues, 1–25, serve as a signal peptide directing secretion; the sequence is MAGAARGLLWAALSLCLLPEPLRAA. At 26–1308 the chain is on the extracellular side; the sequence is HIKKAEAAAA…ENRIFGLPRE (1283 aa). The Peptidase M14 1 domain occupies 46–383; the sequence is RYLHAAELGQ…ESLLTFIEKV (338 aa). The segment at 95–133 is disordered; that stretch reads LPEARQDGEKKKKEEEEEEEEEEGEEGGGGALPGRPQVK. A compositionally biased stretch (basic and acidic residues) spans 96–108; sequence PEARQDGEKKKKE. Residues 109–120 show a composition bias toward acidic residues; sequence EEEEEEEEEGEE. Zn(2+) contacts are provided by histidine 139 and glutamate 142. A glycan (N-linked (GlcNAc...) asparagine) is linked at asparagine 172. Residues 188-235 are disordered; that stretch reads ERAREGDCGGGGGGGGEGGGEPGGRENSRGRDLNRSFPDQFGSAQPDL. A compositionally biased stretch (gly residues) spans 195–209; sequence CGGGGGGGGEGGGEP. Residues 210-221 show a composition bias toward basic and acidic residues; it reads GGRENSRGRDLN. An N-linked (GlcNAc...) asparagine glycan is attached at asparagine 221. Histidine 260 is a binding site for Zn(2+). Glutamate 353 (proton donor/acceptor) is an active-site residue. Asparagine 402, asparagine 413, asparagine 432, and asparagine 472 each carry an N-linked (GlcNAc...) asparagine glycan. The Peptidase M14 2 domain occupies 511-801; it reads RHHHFSDMEI…RSLLQFIKQV (291 aa). Histidine 573 and glutamate 576 together coordinate Zn(2+). A disordered region spans residues 614-639; that stretch reads SMNPDGYEKSQEGDRGGTVGRNNSNN. Basic and acidic residues predominate over residues 619–628; it reads GYEKSQEGDR. Asparagine 635 carries N-linked (GlcNAc...) asparagine glycosylation. Histidine 680 serves as a coordination point for Zn(2+). Residue glutamate 771 is the Proton donor/acceptor of the active site. Asparagine 820, asparagine 876, asparagine 958, asparagine 981, asparagine 1073, and asparagine 1151 each carry an N-linked (GlcNAc...) asparagine glycan. Residues 935–1220 form the Peptidase M14 3 domain; that stretch reads RYRPYKDLSE…KSLLSMLVEV (286 aa). A helical transmembrane segment spans residues 1309-1329; that stretch reads LVVTVAGASMSALVLTACIIW. Residues cysteine 1326, cysteine 1330, and cysteine 1332 are each lipidated (S-palmitoyl cysteine). Topologically, residues 1330–1389 are cytoplasmic; the sequence is CVCSIKSNRHKDGFPTLRQHHDDYEDEIRMMSTGSKKSLLSHEFQDETDTEEETLYSSKH. The disordered stretch occupies residues 1367-1389; that stretch reads SLLSHEFQDETDTEEETLYSSKH.

Belongs to the peptidase M14 family. Binds to pre-S, hepatitis B virus large envelope protein, via the carboxypeptidase-like domain. Zn(2+) is required as a cofactor. In terms of processing, the N-terminus is blocked. In terms of tissue distribution, expressed in liver, lung, kidney, heart, stomach, pancreas, spleen, gall bladder and intestine, but not in skeletal muscle.

The protein localises to the cell membrane. The enzyme catalyses Releases C-terminal Arg and Lys from polypeptides.. The sequence is that of Carboxypeptidase D (CPD) from Anas platyrhynchos (Mallard).